An 86-amino-acid chain; its full sequence is Weak toxin 2 (86 aa).

Positions 1–23 are cleaved as a signal peptide; the sequence is MKTLLLTLVVVAIVCLDLGYTLT. 5 cysteine pairs are disulfide-bonded: Cys24/Cys45, Cys27/Cys32, Cys38/Cys63, Cys67/Cys78, and Cys79/Cys84.

The protein belongs to the three-finger toxin family. Ancestral subfamily. Orphan group II sub-subfamily. As to expression, expressed by the venom gland.

It localises to the secreted. Binds with low affinity to muscular (alpha-1-beta-1-delta-epsilon/CHRNA1-CHRNB1-CHRND-CHRNE) and very low affinity to neuronal (alpha-7/CHRNA7) nicotinic acetylcholine receptor (nAChR). This is Weak toxin 2 from Bungarus candidus (Malayan krait).